A 104-amino-acid polypeptide reads, in one-letter code: Nucleoid-associated protein Ccon26_18480 (104 aa).

The segment covering 16–34 has biased composition (basic and acidic residues); that stretch reads DVQKQAKQMEEESKNKEFG. A disordered region spans residues 16–38; that stretch reads DVQKQAKQMEEESKNKEFGAKSG.

Belongs to the YbaB/EbfC family. As to quaternary structure, homodimer.

Its subcellular location is the cytoplasm. It localises to the nucleoid. Its function is as follows. Binds to DNA and alters its conformation. May be involved in regulation of gene expression, nucleoid organization and DNA protection. The sequence is that of Nucleoid-associated protein Ccon26_18480 from Campylobacter concisus (strain 13826).